Here is a 363-residue protein sequence, read N- to C-terminus: Cleavage and termination factor 1 (363 aa).

Residues 7 to 85 (NVVFVGNIPY…RKIRVEFPSN (79 aa)) form the RRM domain. The disordered stretch occupies residues 291–325 (QPASATSSPPSVPQKIPSSNHKSQQANGSDQGNEG). Residues 306-322 (IPSSNHKSQQANGSDQG) show a composition bias toward polar residues.

In terms of assembly, interacts with res2.

The protein localises to the nucleus. Its function is as follows. Component of the cleavage factor I (CF I) involved in pre-mRNA 3'-end processing. The chain is Cleavage and termination factor 1 (ctf1) from Schizosaccharomyces pombe (strain 972 / ATCC 24843) (Fission yeast).